The sequence spans 667 residues: Soluble guanylate cyclase 89Da (667 aa).

His104 is a binding site for heme. The segment at 337 to 364 is disordered; the sequence is AQEFSESHPVDDDESAREDEIDPATGER. A compositionally biased stretch (acidic residues) spans 347-358; that stretch reads DDDESAREDEID. The stretch at 427-455 forms a coiled coil; the sequence is QHCSKLEIMFEKEEQRSDELEKSLELADS. The Guanylate cyclase domain maps to 491 to 617; sequence SVIFLEVMNV…DTVNTASRME (127 aa).

Belongs to the adenylyl cyclase class-4/guanylyl cyclase family. As to quaternary structure, heterodimer; with Gyc88E, in the presence of magnesium or manganese. The cofactor is heme.

The protein localises to the cytoplasm. It carries out the reaction GTP = 3',5'-cyclic GMP + diphosphate. With respect to regulation, probably not activated by nitric oxide (NO). Heterodimer also exhibits some stimulation, some compounds (SIN-1 and two of the NONOates) that were ineffective at stimulating Gyc-88E alone did stimulate the heterodimer. In terms of biological role, heterodimers with Gyc-89Da and Gyc-89Db are activated in response to changing oxygen concentrations, alerting flies to hypoxic environments. Under normal oxygen concentrations, oxygen binds to the heme group and results in low levels of guanylyl cyclase activity. When exposed to reduced oxygen concentrations, the oxygen dissociates from the heme group resulting in activation of the enzyme. The chain is Soluble guanylate cyclase 89Da from Drosophila melanogaster (Fruit fly).